A 262-amino-acid chain; its full sequence is Hemin import ATP-binding protein HmuV (262 aa).

Residues 3–244 enclose the ABC transporter domain; the sequence is LQARNLTLAR…DHMRRVYGIE (242 aa). 35-42 is a binding site for ATP; it reads GANGAGKS.

The protein belongs to the ABC transporter superfamily. Heme (hemin) importer (TC 3.A.1.14.5) family. In terms of assembly, the complex is composed of two ATP-binding proteins (HmuV), two transmembrane proteins (HmuU) and a solute-binding protein (HmuT).

Its subcellular location is the cell inner membrane. Functionally, part of the ABC transporter complex HmuTUV involved in hemin import. Responsible for energy coupling to the transport system. The polypeptide is Hemin import ATP-binding protein HmuV (Bordetella pertussis (strain Tohama I / ATCC BAA-589 / NCTC 13251)).